We begin with the raw amino-acid sequence, 219 residues long: NAD(P)H-quinone oxidoreductase subunit I (219 aa).

2 4Fe-4S ferredoxin-type domains span residues 55–84 (GRIHYEFDKCIACEVCVRVCPINLPVVDWV) and 95–124 (RNYSIDFGVCIFCGNCVEYCPTNCLSMTEE). C64, C67, C70, C74, C104, C107, C110, and C114 together coordinate [4Fe-4S] cluster.

The protein belongs to the complex I 23 kDa subunit family. NDH-1 is composed of at least 11 different subunits. It depends on [4Fe-4S] cluster as a cofactor.

The protein resides in the cellular thylakoid membrane. It catalyses the reaction a plastoquinone + NADH + (n+1) H(+)(in) = a plastoquinol + NAD(+) + n H(+)(out). The catalysed reaction is a plastoquinone + NADPH + (n+1) H(+)(in) = a plastoquinol + NADP(+) + n H(+)(out). In terms of biological role, NDH-1 shuttles electrons from an unknown electron donor, via FMN and iron-sulfur (Fe-S) centers, to quinones in the respiratory and/or the photosynthetic chain. The immediate electron acceptor for the enzyme in this species is believed to be plastoquinone. Couples the redox reaction to proton translocation, and thus conserves the redox energy in a proton gradient. This is NAD(P)H-quinone oxidoreductase subunit I from Prochlorococcus marinus (strain SARG / CCMP1375 / SS120).